The primary structure comprises 139 residues: Putative nickel-responsive regulator (139 aa).

His-76, His-87, His-89, and Cys-95 together coordinate Ni(2+).

Belongs to the transcriptional regulatory CopG/NikR family. The cofactor is Ni(2+).

Functionally, transcriptional regulator. This chain is Putative nickel-responsive regulator, found in Rhodopseudomonas palustris (strain HaA2).